We begin with the raw amino-acid sequence, 204 residues long: Holliday junction branch migration complex subunit RuvA (204 aa).

The interval 1-67 is domain I; it reads MIGYLEGKIL…QPKPVLIGFN (67 aa). A domain II region spans residues 68–145; it reads SLEEREFFER…VFAGEHGGEP (78 aa). The interval 146 to 156 is flexible linker; that stretch reads AGPAPVEENFH. The interval 156–204 is domain III; that stretch reads HLLVLDVLVNQLGHKAAEAKELINQAIKRNPAISSPEELFDEVYRGETG.

This sequence belongs to the RuvA family. Homotetramer. Forms an RuvA(8)-RuvB(12)-Holliday junction (HJ) complex. HJ DNA is sandwiched between 2 RuvA tetramers; dsDNA enters through RuvA and exits via RuvB. An RuvB hexamer assembles on each DNA strand where it exits the tetramer. Each RuvB hexamer is contacted by two RuvA subunits (via domain III) on 2 adjacent RuvB subunits; this complex drives branch migration. In the full resolvosome a probable DNA-RuvA(4)-RuvB(12)-RuvC(2) complex forms which resolves the HJ.

It localises to the cytoplasm. In terms of biological role, the RuvA-RuvB-RuvC complex processes Holliday junction (HJ) DNA during genetic recombination and DNA repair, while the RuvA-RuvB complex plays an important role in the rescue of blocked DNA replication forks via replication fork reversal (RFR). RuvA specifically binds to HJ cruciform DNA, conferring on it an open structure. The RuvB hexamer acts as an ATP-dependent pump, pulling dsDNA into and through the RuvAB complex. HJ branch migration allows RuvC to scan DNA until it finds its consensus sequence, where it cleaves and resolves the cruciform DNA. The polypeptide is Holliday junction branch migration complex subunit RuvA (Desulfatibacillum aliphaticivorans).